A 63-amino-acid polypeptide reads, in one-letter code: Prokaryotic ubiquitin-like protein Pup (63 aa).

Residues 1–28 form a disordered region; it reads MSDRQTQIPAGGGREDDHDDQVQSAGQV. An ARC ATPase binding region spans residues 19-57; sequence DDQVQSAGQVQVNTEGVDDLLDEIDGLLENNAEEFVRSY. E63 is covalently cross-linked (Isoglutamyl lysine isopeptide (Glu-Lys) (interchain with K-? in acceptor proteins)).

It belongs to the prokaryotic ubiquitin-like protein family. Strongly interacts with the proteasome-associated ATPase ARC through a hydrophobic interface; the interacting region of Pup lies in its C-terminal half. There is one Pup binding site per ARC hexamer ring.

The protein operates within protein degradation; proteasomal Pup-dependent pathway. In terms of biological role, protein modifier that is covalently attached to lysine residues of substrate proteins, thereby targeting them for proteasomal degradation. The tagging system is termed pupylation. This chain is Prokaryotic ubiquitin-like protein Pup, found in Corynebacterium efficiens (strain DSM 44549 / YS-314 / AJ 12310 / JCM 11189 / NBRC 100395).